Consider the following 325-residue polypeptide: Methionine import ATP-binding protein MetN 3 (325 aa).

The 238-residue stretch at 2 to 239 (IEVQQLCKVY…PQSALGRALL (238 aa)) folds into the ABC transporter domain. 36-43 (GRSGAGKS) is an ATP binding site.

It belongs to the ABC transporter superfamily. Methionine importer (TC 3.A.1.24) family. As to quaternary structure, the complex is composed of two ATP-binding proteins (MetN), two transmembrane proteins (MetI) and a solute-binding protein (MetQ).

The protein resides in the cell inner membrane. The catalysed reaction is L-methionine(out) + ATP + H2O = L-methionine(in) + ADP + phosphate + H(+). The enzyme catalyses D-methionine(out) + ATP + H2O = D-methionine(in) + ADP + phosphate + H(+). In terms of biological role, part of the ABC transporter complex MetNIQ involved in methionine import. Responsible for energy coupling to the transport system. This is Methionine import ATP-binding protein MetN 3 from Pseudomonas fluorescens (strain ATCC BAA-477 / NRRL B-23932 / Pf-5).